The chain runs to 735 residues: Muskelin (735 aa).

A2 bears the N-acetylalanine mark. In terms of domain architecture, LisH spans 172–204 (REQEAIRLCLKHFRQHNYTEAFESLQKKTKIAL). Residues 206 to 258 (HPMLTDMHDKLVLKGDFDACEELIEKAVNDGLFNQYISQQEYKPRWSQIIPKS) form the CTLH domain. 6 Kelch repeats span residues 284–330 (TVYL…SCHK), 339–391 (QIYT…FDHQ), 400–458 (MIYT…SRIG), 469–515 (CLYV…TGFT), 526–578 (EIHV…SLQE), and 597–651 (VHYL…AQMD). The tract at residues 701–735 (DHTYAQRTQLFDTLVNFFPDSMTPPKGNLVDLITL) is important for location in the cytosol.

In terms of assembly, homodimer; may form higher oligomers. Identified in the CTLH complex that contains GID4, RANBP9 and/or RANBP10, MKLN1, MAEA, RMND5A (or alternatively its paralog RMND5B), GID8, ARMC8, WDR26 and YPEL5. Within this complex, MAEA, RMND5A (or alternatively its paralog RMND5B), GID8, WDR26, and RANBP9 and/or RANBP10 form the catalytic core, while GID4, MKLN1, ARMC8 and YPEL5 have ancillary roles. Interacts with RANBP9. Part of a complex consisting of RANBP9, MKLN1 and GID8. Interacts with GABRA1. Interacts with the C-terminal tail of PTGER3. As to expression, detected in brain, especially in hippocampus and cerebellum (at protein level).

The protein localises to the cytoplasm. Its subcellular location is the cytosol. The protein resides in the nucleus. It localises to the nucleoplasm. It is found in the cell projection. The protein localises to the ruffle. Its subcellular location is the cell cortex. The protein resides in the synapse. It localises to the postsynapse. Component of the CTLH E3 ubiquitin-protein ligase complex that selectively accepts ubiquitin from UBE2H and mediates ubiquitination and subsequent proteasomal degradation of the transcription factor HBP1. Required for internalization of the GABA receptor GABRA1 from the cell membrane via endosomes and subsequent GABRA1 degradation. Acts as a mediator of cell spreading and cytoskeletal responses to the extracellular matrix component THBS1. The protein is Muskelin (Mkln1) of Mus musculus (Mouse).